The chain runs to 295 residues: Alpha-soluble NSF attachment protein (295 aa).

Met-1 bears the N-acetylmethionine mark. Phosphoserine is present on residues Ser-26, Ser-29, and Ser-195.

This sequence belongs to the SNAP family. Interacts with PRKCABP, and disrupts the interaction between GRIA2 and PRKCABP, leading to the internalization of GRIA2. Found in a complex with VAMP8. Component of a SNARE-like complex that contains at least ZW10, USE1L, RINT1, STX18 and NAPA/SNAP-alpha. Interacts with VTI1A. Interacts with STX12. Interacts with GNA12 (via N-terminus); the interaction promotes CDH5 localization to plasma membrane.

It is found in the cell membrane. Its function is as follows. Required for vesicular transport between the endoplasmic reticulum and the Golgi apparatus. Together with GNA12 promotes CDH5 localization to plasma membrane. The sequence is that of Alpha-soluble NSF attachment protein (Napa) from Mus musculus (Mouse).